We begin with the raw amino-acid sequence, 273 residues long: Tryptase (273 aa).

The first 18 residues, 1-18, serve as a signal peptide directing secretion; that stretch reads MLKLLLLTLPLLSSLVHA. Residues 19-28 constitute a propeptide, activation peptide; the sequence is APSLAMPREG. The region spanning 29-270 is the Peptidase S1 domain; that stretch reads IVGGQEASGN…YLDWIYRYVP (242 aa). Asn-49 carries an N-linked (GlcNAc...) asparagine glycan. Cysteines 57 and 73 form a disulfide. Catalysis depends on charge relay system residues His-72 and Asp-119. 3 disulfide bridges follow: Cys-153/Cys-228, Cys-186/Cys-209, and Cys-218/Cys-246. Catalysis depends on Ser-222, which acts as the Charge relay system.

It belongs to the peptidase S1 family. Tryptase subfamily. Homotetramer. Post-translationally, glycosylated. In terms of tissue distribution, mast cells.

It is found in the secreted. It carries out the reaction Preferential cleavage: Arg-|-Xaa, Lys-|-Xaa, but with more restricted specificity than trypsin.. In terms of biological role, tryptase is the major neutral protease present in mast cells and is secreted upon the coupled activation-degranulation response of this cell type. May play a role in innate immunity. This chain is Tryptase (Tpsab1), found in Rattus norvegicus (Rat).